We begin with the raw amino-acid sequence, 194 residues long: Imidazoleglycerol-phosphate dehydratase (194 aa).

Belongs to the imidazoleglycerol-phosphate dehydratase family.

Its subcellular location is the cytoplasm. The enzyme catalyses D-erythro-1-(imidazol-4-yl)glycerol 3-phosphate = 3-(imidazol-4-yl)-2-oxopropyl phosphate + H2O. It participates in amino-acid biosynthesis; L-histidine biosynthesis; L-histidine from 5-phospho-alpha-D-ribose 1-diphosphate: step 6/9. In Sulfurisphaera tokodaii (strain DSM 16993 / JCM 10545 / NBRC 100140 / 7) (Sulfolobus tokodaii), this protein is Imidazoleglycerol-phosphate dehydratase.